The sequence spans 295 residues: Manganese transport system membrane protein MntD (295 aa).

9 helical membrane-spanning segments follow: residues 7–27, 42–62, 63–83, 87–107, 138–158, 174–194, 203–223, 227–247, and 253–273; these read IIATGVLVGVSCGLIGTFLVL, LLGIVGAFLVTGSLDGIYMFI, GAAATGLLTAFLVQLLHSKGV, AAIGVVFTSLFAIGVILLSVY, IGPKAFWMLASVLVLNVVLIS, ALALGIPVLLIHYVQMGMLSL, VGAVLVVAMLIVPPAAAHLLT, LYMLILSALIGGLSAVMGYFF, and VSISGAMAAMTGVCYASAFLF.

This sequence belongs to the ABC-3 integral membrane protein family. The complex is probably composed of two ATP-binding proteins (MntB), two transmembrane proteins (MntC and MntD) and a solute-binding protein (MntA).

It localises to the cell membrane. Functionally, probably part of the ABC transporter complex MntABCD involved in manganese import. Probably responsible for the translocation of the substrate across the membrane. In Bacillus subtilis (strain 168), this protein is Manganese transport system membrane protein MntD.